We begin with the raw amino-acid sequence, 709 residues long: Alpha-1,2-mannosyltransferase MNN24 (709 aa).

Residues 1-9 (MFSIPVSSK) lie on the Cytoplasmic side of the membrane. A helical membrane pass occupies residues 10–30 (TVRLILVSLLLITLINILAAF). At 31–709 (QRSTLSSWFP…KNHIEFLEIS (679 aa)) the chain is on the extracellular side. N-linked (GlcNAc...) asparagine glycosylation occurs at asparagine 317.

Belongs to the MNN1/MNT family.

The protein resides in the golgi apparatus membrane. The protein operates within protein modification; protein glycosylation. Its function is as follows. Alpha-1,2-mannosyltransferase required for cell wall integrity. Responsible for addition of the first alpha-1,2-linked mannose to form the branches on the mannan backbone of oligosaccharides. Addition of alpha-1,2-mannose is required for stabilization of the alpha-1,6-mannose backbone and hence regulates mannan fibril length; and is important for both immune recognition and virulence. This chain is Alpha-1,2-mannosyltransferase MNN24 (MNN24), found in Candida albicans (strain SC5314 / ATCC MYA-2876) (Yeast).